Reading from the N-terminus, the 526-residue chain is GMP synthase [glutamine-hydrolyzing] (526 aa).

Residues 10–208 form the Glutamine amidotransferase type-1 domain; the sequence is RILILDFGSQ…VVDLCGCEKL (199 aa). Residue Cys-87 is the Nucleophile of the active site. Catalysis depends on residues His-182 and Glu-184. A GMPS ATP-PPase domain is found at 209–401; sequence WTTENIIDDS…LGLPSDMVYR (193 aa). 236-242 is an ATP binding site; the sequence is SGGVDSS.

As to quaternary structure, homodimer.

The enzyme catalyses XMP + L-glutamine + ATP + H2O = GMP + L-glutamate + AMP + diphosphate + 2 H(+). The protein operates within purine metabolism; GMP biosynthesis; GMP from XMP (L-Gln route): step 1/1. Its function is as follows. Catalyzes the synthesis of GMP from XMP. This is GMP synthase [glutamine-hydrolyzing] from Hydrogenovibrio crunogenus (strain DSM 25203 / XCL-2) (Thiomicrospira crunogena).